The sequence spans 467 residues: MRLPREIGPIHFVGIGGIGMSGIAEVLCNLGYTVQGSDASESANVARLREKGIAISVGHKAENVAGADVVVVSTAIKRDNPELLAARAQRIPVVRRAEMLAELMRLKSCVAIAGTHGKTTTTSMVAALLDAGEFDPTVINGGIINAYGTNARLGAGEWMVVEADESDGTFLKLPADVAIVTNVDPEHLDHFKTFEAVQNAFRDFVENVPFYGFAVMCIDHPVVQALVGKIEDRRIITYGENPQADVRLLDLKPNGGASTFKVAFRDRKANTAHEIADLKLPMPGRHNALNATAAIAVAHELGLSDDTIRKALAGFGGVRRRFTKTGDWNGVSIIDDYGHHPVEIAAVLKAARESTKTKVIAVVQPHRFTRLQSLFEEFCTCFNDADAVIVAEVYPAGEAPIPGIDRDNFVLGLRAHGHREVIPLQESAALAGVVHSIAKPGDYVVLLGAGNITQWAYALPGELKALG.

114-120 (GTHGKTT) contacts ATP.

The protein belongs to the MurCDEF family.

It is found in the cytoplasm. The catalysed reaction is UDP-N-acetyl-alpha-D-muramate + L-alanine + ATP = UDP-N-acetyl-alpha-D-muramoyl-L-alanine + ADP + phosphate + H(+). It functions in the pathway cell wall biogenesis; peptidoglycan biosynthesis. In terms of biological role, cell wall formation. This is UDP-N-acetylmuramate--L-alanine ligase from Rhodopseudomonas palustris (strain BisA53).